Reading from the N-terminus, the 77-residue chain is Liver-expressed antimicrobial peptide 2 (77 aa).

An N-terminal signal peptide occupies residues 1–22 (MWHLKLCAVLMIFLLLLGQTDG). Residues 23–37 (SPIPEVSSAKRRPRR) constitute a propeptide that is removed on maturation. 2 disulfide bridges follow: C54/C65 and C60/C70.

Belongs to the LEAP2 family.

Its subcellular location is the secreted. Functionally, has an antimicrobial activity. The polypeptide is Liver-expressed antimicrobial peptide 2 (LEAP2) (Macaca mulatta (Rhesus macaque)).